Here is a 140-residue protein sequence, read N- to C-terminus: Nucleoside diphosphate kinase (140 aa).

Lys-11, Phe-59, Arg-87, Thr-93, Arg-104, and Asn-114 together coordinate ATP. His-117 functions as the Pros-phosphohistidine intermediate in the catalytic mechanism.

Belongs to the NDK family. Homotetramer. It depends on Mg(2+) as a cofactor.

Its subcellular location is the cytoplasm. The enzyme catalyses a 2'-deoxyribonucleoside 5'-diphosphate + ATP = a 2'-deoxyribonucleoside 5'-triphosphate + ADP. It catalyses the reaction a ribonucleoside 5'-diphosphate + ATP = a ribonucleoside 5'-triphosphate + ADP. In terms of biological role, major role in the synthesis of nucleoside triphosphates other than ATP. The ATP gamma phosphate is transferred to the NDP beta phosphate via a ping-pong mechanism, using a phosphorylated active-site intermediate. In Maricaulis maris (strain MCS10) (Caulobacter maris), this protein is Nucleoside diphosphate kinase.